A 171-amino-acid polypeptide reads, in one-letter code: 3-hydroxydecanoyl-[acyl-carrier-protein] dehydratase (171 aa).

Residue His-70 is part of the active site.

This sequence belongs to the thioester dehydratase family. FabA subfamily. In terms of assembly, homodimer.

Its subcellular location is the cytoplasm. It carries out the reaction a (3R)-hydroxyacyl-[ACP] = a (2E)-enoyl-[ACP] + H2O. The catalysed reaction is (3R)-hydroxydecanoyl-[ACP] = (2E)-decenoyl-[ACP] + H2O. It catalyses the reaction (2E)-decenoyl-[ACP] = (3Z)-decenoyl-[ACP]. It functions in the pathway lipid metabolism; fatty acid biosynthesis. Necessary for the introduction of cis unsaturation into fatty acids. Catalyzes the dehydration of (3R)-3-hydroxydecanoyl-ACP to E-(2)-decenoyl-ACP and then its isomerization to Z-(3)-decenoyl-ACP. Can catalyze the dehydratase reaction for beta-hydroxyacyl-ACPs with saturated chain lengths up to 16:0, being most active on intermediate chain length. The protein is 3-hydroxydecanoyl-[acyl-carrier-protein] dehydratase of Shewanella loihica (strain ATCC BAA-1088 / PV-4).